Consider the following 836-residue polypeptide: CUB domain-containing protein 1 (836 aa).

Positions 1–29 (MAGLNCGVSIALLGVLLLGAARLPRGAEA) are cleaved as a signal peptide. Topologically, residues 30 to 667 (FEIALPRESN…TLTPRTVDLT (638 aa)) are extracellular. Residues Asn-39, Asn-122, Asn-180, Asn-205, Asn-270, Asn-310, and Asn-386 are each glycosylated (N-linked (GlcNAc...) asparagine). Positions 417 to 544 (CTDHRYCQRK…VSFIPYFKEE (128 aa)) constitute a CUB domain. Cys-476 and Cys-499 are oxidised to a cystine. The chain crosses the membrane as a helical span at residues 668–688 (VILIAAVGGGVLLLSALGLII). At 689–836 (CCVKKKKKKT…NTQEPMEPAE (148 aa)) the chain is on the cytoplasmic side. At Tyr-734 the chain carries Phosphotyrosine. Residues 776–836 (PPTICSRAPT…NTQEPMEPAE (61 aa)) are disordered.

In terms of assembly, interacts with CDH2/N-cadherin, CDH3/P-cadherin, SDC1/syndecan-1, SDC4/syndecan-4 and the serine protease ST14/MT-SP1. Also interacts with SRC and PRKCG/protein kinase C gamma. Phosphorylated on tyrosine by kinases of the SRC family such as SRC and YES as well as by the protein kinase C gamma/PRKCG. Dephosphorylated by phosphotyrosine phosphatases. Also phosphorylated by suramin, a heparin analog. Tyrosine phosphorylated in response to dissociation of integrin alpha-6 beta-4 from laminin-5. Post-translationally, N-glycosylated. In terms of processing, a soluble form may also be produced by proteolytic cleavage at the cell surface (shedding). Another peptide of 80 kDa (p80) is present in cultured keratinocytes probably due to tryptic cleavage at an unidentified site on its N-terminal side. Converted to p80 by plasmin, a trypsin-like protease. As to expression, highly expressed in mitotic cells with low expression during interphase. Detected at highest levels in skeletal muscle and colon with lower levels in kidney, small intestine, placenta and lung. Up-regulated in a number of human tumor cell lines, as well as in colorectal cancer, breast carcinoma and lung cancer. Also expressed in cells with phenotypes reminiscent of mesenchymal stem cells and neural stem cells.

It localises to the cell membrane. Its subcellular location is the secreted. Its function is as follows. May be involved in cell adhesion and cell matrix association. May play a role in the regulation of anchorage versus migration or proliferation versus differentiation via its phosphorylation. May be a novel marker for leukemia diagnosis and for immature hematopoietic stem cell subsets. Belongs to the tetraspanin web involved in tumor progression and metastasis. This Homo sapiens (Human) protein is CUB domain-containing protein 1 (CDCP1).